The following is a 61-amino-acid chain: Alpha-conotoxin-like PnMGMR-02 (61 aa).

The first 21 residues, 1 to 21 (MGMRMMFTVFLLVVLATTVVS), serve as a signal peptide directing secretion. The propeptide occupies 22–44 (FTSDRASDGGNAAASDLIALTIK). 2 cysteine pairs are disulfide-bonded: Cys-46–Cys-52 and Cys-47–Cys-60. Residues 48-50 (SRP) form a ser-Xaa-Pro motif, crucial for potent interaction with nAChR region. A Cysteine amide modification is found at Cys-60.

It belongs to the conotoxin A superfamily. In terms of tissue distribution, expressed by the venom duct.

The protein localises to the secreted. In terms of biological role, alpha-conotoxins act on postsynaptic membranes, they bind to the nicotinic acetylcholine receptors (nAChR) and thus inhibit them. This toxin blocks mammalian nAChRs (alpha-7 &gt; alpha-3/beta-2). The chain is Alpha-conotoxin-like PnMGMR-02 from Conus pennaceus (Feathered cone).